We begin with the raw amino-acid sequence, 331 residues long: L-lactate dehydrogenase A chain (331 aa).

Residues 29 to 57 (GMVG…MEDK) and arginine 98 each bind NAD(+). Substrate is bound by residues arginine 105, asparagine 137, and arginine 168. NAD(+) is bound at residue asparagine 137. Catalysis depends on histidine 192, which acts as the Proton acceptor. Threonine 247 serves as a coordination point for substrate.

It belongs to the LDH/MDH superfamily. LDH family. As to quaternary structure, homotetramer.

It localises to the cytoplasm. The enzyme catalyses (S)-lactate + NAD(+) = pyruvate + NADH + H(+). The protein operates within fermentation; pyruvate fermentation to lactate; (S)-lactate from pyruvate: step 1/1. In terms of biological role, interconverts simultaneously and stereospecifically pyruvate and lactate with concomitant interconversion of NADH and NAD(+). The polypeptide is L-lactate dehydrogenase A chain (ldha) (Harpagifer antarcticus (Antarctic spiny plunderfish)).